Reading from the N-terminus, the 545-residue chain is Thermosome subunit (545 aa).

The protein belongs to the TCP-1 chaperonin family. As to quaternary structure, forms an oligomeric complex of eight-membered rings.

Its function is as follows. Molecular chaperone; binds unfolded polypeptides in vitro, and has a weak ATPase activity. The polypeptide is Thermosome subunit (ths) (Methanopyrus kandleri (strain AV19 / DSM 6324 / JCM 9639 / NBRC 100938)).